The primary structure comprises 251 residues: Metallo-beta-lactamase domain-containing protein 1 (251 aa).

Zn(2+)-binding residues include H118, H120, D122, H123, H173, D196, and H235.

Belongs to the metallo-beta-lactamase superfamily. Glyoxalase II family. Homodimer. It depends on Zn(2+) as a cofactor.

It localises to the cytoplasm. Its subcellular location is the cytosol. The protein resides in the nucleus. The enzyme catalyses a ribonucleotidyl-ribonucleotide-RNA + H2O = a 3'-end ribonucleotide-RNA + a 5'-end 5'-phospho-ribonucleoside-RNA + H(+). In terms of biological role, endoribonuclease that catalyzes the hydrolysis of histone-coding pre-mRNA 3'-end. Involved in histone pre-mRNA processing during the S-phase of the cell cycle, which is required for entering/progressing through S-phase. Cleaves histone pre-mRNA at a major and a minor cleavage site after the 5'-ACCCA-3' and the 5'-ACCCACA-3' sequence, respectively, and located downstream of the stem-loop. May require the presence of the HDE element located at the histone pre-RNA 3'-end to avoid non-specific cleavage. This chain is Metallo-beta-lactamase domain-containing protein 1 (Mblac1), found in Rattus norvegicus (Rat).